The chain runs to 360 residues: MEEIFDKLQAVADRYDELNELISDPEVIADSQRFMKLSKEEGSLRETVEKYNQYKKVTQTISDDEELLRETNDDDLTALTKEELAEAREEQAQLEKELEVLLIPKDPNDDKNIIMEIRGAAGGDEASLFAADLYNMYLRYAEKQGWKVEVVDRNETEVGGFKEIALMITGDKVYSKLKFENGAHRVQRVPVTESAGRVHTSTATVGVMPEAEDVDVDIDPKDIRVDVYRSSGAGGQHVNKTSSAVRMTHLPTGIVVAMQDERSQQQNRAKAMRILKSRVYDYYQQQEQSAYDQKRKDAIGTGDRSERIRTYNYPQNRVTDHRIGLTLNKLDKIMAGDLDEIIEALIVADQTQKLEQLRNE.

Q236 bears the N5-methylglutamine mark.

Belongs to the prokaryotic/mitochondrial release factor family. Post-translationally, methylated by PrmC. Methylation increases the termination efficiency of RF1.

The protein resides in the cytoplasm. Its function is as follows. Peptide chain release factor 1 directs the termination of translation in response to the peptide chain termination codons UAG and UAA. The polypeptide is Peptide chain release factor 1 (Limosilactobacillus reuteri subsp. reuteri (strain JCM 1112) (Lactobacillus reuteri)).